A 209-amino-acid polypeptide reads, in one-letter code: PF03932 family protein CutC (209 aa).

Its subcellular location is the cytoplasm. This Streptococcus pyogenes serotype M6 (strain ATCC BAA-946 / MGAS10394) protein is PF03932 family protein CutC.